We begin with the raw amino-acid sequence, 153 residues long: Large ribosomal subunit protein uL30 (153 aa).

Belongs to the universal ribosomal protein uL30 family. As to quaternary structure, part of the 50S ribosomal subunit.

The protein is Large ribosomal subunit protein uL30 of Methanocorpusculum labreanum (strain ATCC 43576 / DSM 4855 / Z).